Here is a 695-residue protein sequence, read N- to C-terminus: Lupanine 17-hydroxylase [cytochrome c] (695 aa).

Residues 1–26 (MSANKNIWIIRLGVAFVCVAIGAAQA) form the signal peptide. The Cytochrome c domain maps to 598–677 (AMAESGRHIF…ALQAFILQKA (80 aa)). C612, C615, and H616 together coordinate heme c.

The protein belongs to the bacterial PQQ dehydrogenase family. As to quaternary structure, monomer. It depends on pyrroloquinoline quinone as a cofactor. Heme c serves as cofactor.

The protein resides in the periplasm. It carries out the reaction lupanine + 2 Fe(III)-[cytochrome c] + H2O = 17-hydroxylupanine + 2 Fe(II)-[cytochrome c] + 2 H(+). In terms of biological role, catalyzes the first reaction in the catabolism of the alkaloid lupanine. It dehydrogenates lupanine, which can then be hydrated to produce 17-hydroxylupanine. In Pseudomonas sp, this protein is Lupanine 17-hydroxylase [cytochrome c] (luh).